A 517-amino-acid polypeptide reads, in one-letter code: Crotonobetaine/carnitine--CoA ligase (517 aa).

The protein belongs to the ATP-dependent AMP-binding enzyme family.

It catalyses the reaction 4-(trimethylamino)butanoate + ATP + CoA = 4-(trimethylamino)butanoyl-CoA + AMP + diphosphate. The catalysed reaction is crotonobetaine + ATP + CoA = crotonobetainyl-CoA + AMP + diphosphate. It carries out the reaction (R)-carnitine + ATP + CoA = (R)-carnitinyl-CoA + AMP + diphosphate. The protein operates within amine and polyamine metabolism; carnitine metabolism. In terms of biological role, catalyzes the transfer of CoA to carnitine, generating the initial carnitinyl-CoA needed for the CaiB reaction cycle. Also has activity toward crotonobetaine and gamma-butyrobetaine. In Salmonella enteritidis PT4 (strain P125109), this protein is Crotonobetaine/carnitine--CoA ligase.